The sequence spans 491 residues: Ketol-acid reductoisomerase (NADP(+)) (491 aa).

The KARI N-terminal Rossmann domain maps to 15 to 208 (AQLGKCRFMG…GGHRAGVLES (194 aa)). NADP(+) is bound by residues 45–48 (CGAQ), R68, R76, S78, and 108–110 (DKQ). Residue H132 is part of the active site. G158 is a binding site for NADP(+). 2 KARI C-terminal knotted domains span residues 209–344 (SFVA…TAPQ) and 345–484 (YEGK…MTDM). Positions 217, 221, 389, and 393 each coordinate Mg(2+). S414 is a substrate binding site.

This sequence belongs to the ketol-acid reductoisomerase family. Mg(2+) serves as cofactor.

It carries out the reaction (2R)-2,3-dihydroxy-3-methylbutanoate + NADP(+) = (2S)-2-acetolactate + NADPH + H(+). The enzyme catalyses (2R,3R)-2,3-dihydroxy-3-methylpentanoate + NADP(+) = (S)-2-ethyl-2-hydroxy-3-oxobutanoate + NADPH + H(+). The protein operates within amino-acid biosynthesis; L-isoleucine biosynthesis; L-isoleucine from 2-oxobutanoate: step 2/4. Its pathway is amino-acid biosynthesis; L-valine biosynthesis; L-valine from pyruvate: step 2/4. Involved in the biosynthesis of branched-chain amino acids (BCAA). Catalyzes an alkyl-migration followed by a ketol-acid reduction of (S)-2-acetolactate (S2AL) to yield (R)-2,3-dihydroxy-isovalerate. In the isomerase reaction, S2AL is rearranged via a Mg-dependent methyl migration to produce 3-hydroxy-3-methyl-2-ketobutyrate (HMKB). In the reductase reaction, this 2-ketoacid undergoes a metal-dependent reduction by NADPH to yield (R)-2,3-dihydroxy-isovalerate. In Escherichia fergusonii (strain ATCC 35469 / DSM 13698 / CCUG 18766 / IAM 14443 / JCM 21226 / LMG 7866 / NBRC 102419 / NCTC 12128 / CDC 0568-73), this protein is Ketol-acid reductoisomerase (NADP(+)).